The primary structure comprises 121 residues: NADH-quinone oxidoreductase subunit A 1 (121 aa).

Helical transmembrane passes span 11 to 31 (IAIF…APFA), 65 to 85 (LVSI…PWAV), and 90 to 110 (MGWF…VGFI).

Belongs to the complex I subunit 3 family. In terms of assembly, NDH-1 is composed of 14 different subunits. Subunits NuoA, H, J, K, L, M, N constitute the membrane sector of the complex.

The protein localises to the cell inner membrane. The enzyme catalyses a quinone + NADH + 5 H(+)(in) = a quinol + NAD(+) + 4 H(+)(out). Functionally, NDH-1 shuttles electrons from NADH, via FMN and iron-sulfur (Fe-S) centers, to quinones in the respiratory chain. The immediate electron acceptor for the enzyme in this species is believed to be ubiquinone. Couples the redox reaction to proton translocation (for every two electrons transferred, four hydrogen ions are translocated across the cytoplasmic membrane), and thus conserves the redox energy in a proton gradient. This chain is NADH-quinone oxidoreductase subunit A 1, found in Rhizobium meliloti (strain 1021) (Ensifer meliloti).